Consider the following 447-residue polypeptide: Signal recognition particle 54 kDa protein (447 aa).

GTP is bound by residues 103–110, 185–189, and 245–248; these read GVQGSGKT, DTAGR, and TKMD.

Belongs to the GTP-binding SRP family. SRP54 subfamily. In terms of assembly, part of the signal recognition particle protein translocation system, which is composed of SRP and FtsY. Archaeal SRP consists of a 7S RNA molecule of 300 nucleotides and two protein subunits: SRP54 and SRP19.

It is found in the cytoplasm. The enzyme catalyses GTP + H2O = GDP + phosphate + H(+). Involved in targeting and insertion of nascent membrane proteins into the cytoplasmic membrane. Binds to the hydrophobic signal sequence of the ribosome-nascent chain (RNC) as it emerges from the ribosomes. The SRP-RNC complex is then targeted to the cytoplasmic membrane where it interacts with the SRP receptor FtsY. In Saccharolobus islandicus (strain Y.N.15.51 / Yellowstone #2) (Sulfolobus islandicus), this protein is Signal recognition particle 54 kDa protein.